The primary structure comprises 662 residues: MKKLTFLLLCVLCTLSLQAQKQFTLASPDGNLKTTITIGDRLTYDITCNGRQILTPSPISMTLDNGTVWGENAKLSGTSRKSVDEMIPSPFYRASELRNHYNGLTLRFKKDWNVEFRAYNDGIAYRFVNQGKKPFRVVTEVSDYCFPSDMTASVPYVKSGKDGDYNSQFFNSFENTYTTDKLSKLNKQRLMFLPLVVDAGDGVKVCITESDLENYPGLYLSASEGANRLSSMHAPYPKRTVQGGHNQLQMLVKEHEDYIAKVDKPRNFPWRIAVVTTTDKDLAATNLSYLLGAPSRMSDLSWIKPGKVAWDWWNDWNLDGVDFVTGVNNPTYKAYIDFASANGIEYVILDEGWAVNLQADLMQVVKEIDLKELVDYAASKNVGIILWAGYHAFERDMENVCRHYAEMGVKGFKVDFMDRDDQEMTAFNYRAAEMCAKYKLILDLHGTHKPAGLNRTYPNVLNFEGVNGLEQMKWSSPSVDQVKYDVMIPFIRQVSGPMDYTQGAMRNASKGNYYPCYSEPMSQGTRCRQLALYVVFESPFNMLCDTPSNYMREPESTAFIAEIPTVWDESIVLDGKMGEYIVTARRKGDVWYVGGITDWSARDIEVDCSFLGDKSYHATLFKDGVNAHRAGRDYKCESFPIKKDGKLKVHLAPGGGFALKIK.

Residues 1-19 form the signal peptide; the sequence is MKKLTFLLLCVLCTLSLQA. Glu174 lines the Ca(2+) pocket. The Nucleophile role is filled by Asp415. Glu464 and Glu470 together coordinate Ca(2+). Residue Glu470 is the Proton donor/acceptor of the active site.

The protein belongs to the glycosyl hydrolase 97 family. As to quaternary structure, monomer. The cofactor is Ca(2+).

It catalyses the reaction Hydrolysis of terminal, non-reducing alpha-D-galactose residues in alpha-D-galactosides, including galactose oligosaccharides, galactomannans and galactolipids.. With respect to regulation, inhibited by EDTA in vitro. Its function is as follows. Galactosidase that is able to hydrolyze the alpha-1,6 disaccharide melibiose and the synthetic p-nitrophenyl alpha-galactoside substrate (pNP-Gal), with retention of the anomeric configuration. Does not hydrolyze DNP-Glc or pNP-Glc. The chain is Retaining alpha-galactosidase from Bacteroides thetaiotaomicron (strain ATCC 29148 / DSM 2079 / JCM 5827 / CCUG 10774 / NCTC 10582 / VPI-5482 / E50).